A 123-amino-acid chain; its full sequence is Small ribosomal subunit protein uS12 (123 aa).

Residue Asp89 is modified to 3-methylthioaspartic acid.

This sequence belongs to the universal ribosomal protein uS12 family. As to quaternary structure, part of the 30S ribosomal subunit. Contacts proteins S8 and S17. May interact with IF1 in the 30S initiation complex.

In terms of biological role, with S4 and S5 plays an important role in translational accuracy. Its function is as follows. Interacts with and stabilizes bases of the 16S rRNA that are involved in tRNA selection in the A site and with the mRNA backbone. Located at the interface of the 30S and 50S subunits, it traverses the body of the 30S subunit contacting proteins on the other side and probably holding the rRNA structure together. The combined cluster of proteins S8, S12 and S17 appears to hold together the shoulder and platform of the 30S subunit. The sequence is that of Small ribosomal subunit protein uS12 from Rhodopseudomonas palustris (strain HaA2).